Consider the following 163-residue polypeptide: 3-hydroxyacyl-[acyl-carrier-protein] dehydratase FabZ (163 aa).

H58 is a catalytic residue.

This sequence belongs to the thioester dehydratase family. FabZ subfamily.

It is found in the cytoplasm. The catalysed reaction is a (3R)-hydroxyacyl-[ACP] = a (2E)-enoyl-[ACP] + H2O. In terms of biological role, involved in unsaturated fatty acids biosynthesis. Catalyzes the dehydration of short chain beta-hydroxyacyl-ACPs and long chain saturated and unsaturated beta-hydroxyacyl-ACPs. This Francisella tularensis subsp. tularensis (strain FSC 198) protein is 3-hydroxyacyl-[acyl-carrier-protein] dehydratase FabZ.